The following is a 414-amino-acid chain: Isocitrate dehydrogenase [NADP] cytoplasmic (414 aa).

Position 2 is an N-acetylserine (serine 2). Tyrosine 42 is subject to Phosphotyrosine. 75–77 (TIT) serves as a coordination point for NADP(+). Threonine 77 contacts substrate. Residue lysine 81 is modified to N6-acetyllysine. Position 82 (arginine 82) interacts with NADP(+). Residues 94 to 100 (SPNGTIR) and arginine 109 contribute to the substrate site. The residue at position 126 (lysine 126) is an N6-succinyllysine. Arginine 132 and lysine 212 together coordinate substrate. An N6-acetyllysine mark is found at lysine 224, lysine 233, and lysine 243. Aspartate 252 serves as a coordination point for Mn(2+). NADP(+) is bound at residue lysine 260. The Mn(2+) site is built by aspartate 275 and aspartate 279. 310-315 (GTVTRH) provides a ligand contact to NADP(+). Lysine 321 carries the post-translational modification N6-acetyllysine. Position 328 (asparagine 328) interacts with NADP(+). Residue serine 389 is modified to Phosphoserine. The residue at position 400 (lysine 400) is an N6-succinyllysine.

The protein belongs to the isocitrate and isopropylmalate dehydrogenases family. Homodimer. Mg(2+) is required as a cofactor. Requires Mn(2+) as cofactor. In terms of processing, acetylation at Lys-374 dramatically reduces catalytic activity.

The protein localises to the cytoplasm. It localises to the cytosol. The catalysed reaction is D-threo-isocitrate + NADP(+) = 2-oxoglutarate + CO2 + NADPH. Catalyzes the NADP(+)-dependent oxidative decarboxylation of isocitrate (D-threo-isocitrate) to 2-ketoglutarate (2-oxoglutarate), which is required by other enzymes such as the phytanoyl-CoA dioxygenase. Plays a critical role in the generation of NADPH, an important cofactor in many biosynthesis pathways. May act as a corneal epithelial crystallin and may be involved in maintaining corneal epithelial transparency. The protein is Isocitrate dehydrogenase [NADP] cytoplasmic (IDH1) of Pongo abelii (Sumatran orangutan).